A 440-amino-acid polypeptide reads, in one-letter code: GTPase Der (440 aa).

EngA-type G domains follow at residues 3-167 (PIIA…PYDR) and 176-351 (TRIA…EQYC). Residues 9–16 (GRPNVGKS), 56–60 (DTGGF), 119–122 (NKVD), 182–189 (GRPNVGKS), 229–233 (DTAGI), and 294–297 (NKWD) each bind GTP. The 85-residue stretch at 352–436 (KRVTTGELNR…PLKLIFRGRD (85 aa)) folds into the KH-like domain.

Belongs to the TRAFAC class TrmE-Era-EngA-EngB-Septin-like GTPase superfamily. EngA (Der) GTPase family. Associates with the 50S ribosomal subunit.

Functionally, GTPase that plays an essential role in the late steps of ribosome biogenesis. This Citrifermentans bemidjiense (strain ATCC BAA-1014 / DSM 16622 / JCM 12645 / Bem) (Geobacter bemidjiensis) protein is GTPase Der.